The sequence spans 460 residues: Phosphoenolpyruvate carboxylase (460 aa).

Belongs to the PEPCase type 2 family. In terms of assembly, homotetramer. It depends on Mg(2+) as a cofactor.

The enzyme catalyses oxaloacetate + phosphate = phosphoenolpyruvate + hydrogencarbonate. Its function is as follows. Catalyzes the irreversible beta-carboxylation of phosphoenolpyruvate (PEP) to form oxaloacetate (OAA), a four-carbon dicarboxylic acid source for the tricarboxylic acid cycle. This Pyrobaculum aerophilum (strain ATCC 51768 / DSM 7523 / JCM 9630 / CIP 104966 / NBRC 100827 / IM2) protein is Phosphoenolpyruvate carboxylase.